The chain runs to 330 residues: WRKY transcription factor WRKY51 (330 aa).

Residues 39–61 are disordered; that stretch reads QTGTSERSPAPAPAQEQQQQQQV. The segment covering 51–60 has biased composition (low complexity); the sequence is PAQEQQQQQQ. Positions 74-81 match the Nuclear localization signal motif; that stretch reads FKKVISML. Disordered regions lie at residues 91-117 and 302-330; these read RGPVVAQSSGPAASEPAPVRSSPSAVS and YEGEHRHTPSAAGQDHPPAPPPPLALPLA. The span at 101–117 shows a compositional bias: low complexity; the sequence is PAASEPAPVRSSPSAVS. Positions 245 to 311 form a DNA-binding region, WRKY; sequence KVADIPADDF…YEGEHRHTPS (67 aa). The span at 318–330 shows a compositional bias: pro residues; it reads PPAPPPPLALPLA.

It belongs to the WRKY group II-a family. In terms of tissue distribution, highly expressed in aleurone cells. In seeds, predominantly present in the plumule, radicle and scutellum of the embryo.

It is found in the nucleus. Its function is as follows. Transcription factor. Interacts, when in complex with WRKY71, specifically with the W box (5'-(T)TGAC[CT]-3'), a frequently occurring elicitor-responsive cis-acting element. Represses specifically gibberellic acid (GA)-induced promoters in aleurone cells, probably by interfering with GAM1. This is WRKY transcription factor WRKY51 from Oryza sativa subsp. indica (Rice).